We begin with the raw amino-acid sequence, 224 residues long: Protein YiiM (224 aa).

Residues 26 to 163 (IQVDGELMLT…VSADAPLELV (138 aa)) form the MOSC domain.

In terms of assembly, monomer.

In Escherichia coli (strain K12), this protein is Protein YiiM (yiiM).